Consider the following 1070-residue polypeptide: Carbamoyl phosphate synthase large chain (1070 aa).

The tract at residues 1 to 401 (MPKRDDIKTI…ALLKAVRSLE (401 aa)) is carboxyphosphate synthetic domain. Residues R129, R169, G175, G176, K208, I210, E215, G241, I242, H243, Q284, and E298 each coordinate ATP. The 195-residue stretch at 133–327 (RDLMNELGEP…IAKLAAKIAV (195 aa)) folds into the ATP-grasp 1 domain. Mg(2+) contacts are provided by Q284, E298, and N300. Positions 284, 298, and 300 each coordinate Mn(2+). The oligomerization domain stretch occupies residues 402 to 546 (IGADHLLLEE…YSTYEEENES (145 aa)). Residues 547 to 929 (TRSAKESVIV…ALYKGFVASG (383 aa)) are carbamoyl phosphate synthetic domain. Positions 671–861 (EKALEILQIP…MANVATRVIL (191 aa)) constitute an ATP-grasp 2 domain. Residues R707, R746, V748, E752, G777, V778, H779, S780, Q820, and E832 each coordinate ATP. 3 residues coordinate Mg(2+): Q820, E832, and N834. Mn(2+) contacts are provided by Q820, E832, and N834. An MGS-like domain is found at 930-1070 (TTMHDYGTVL…SEVKQPKARV (141 aa)). The tract at residues 930–1070 (TTMHDYGTVL…SEVKQPKARV (141 aa)) is allosteric domain.

The protein belongs to the CarB family. As to quaternary structure, composed of two chains; the small (or glutamine) chain promotes the hydrolysis of glutamine to ammonia, which is used by the large (or ammonia) chain to synthesize carbamoyl phosphate. Tetramer of heterodimers (alpha,beta)4. The cofactor is Mg(2+). It depends on Mn(2+) as a cofactor.

It carries out the reaction hydrogencarbonate + L-glutamine + 2 ATP + H2O = carbamoyl phosphate + L-glutamate + 2 ADP + phosphate + 2 H(+). The catalysed reaction is hydrogencarbonate + NH4(+) + 2 ATP = carbamoyl phosphate + 2 ADP + phosphate + 2 H(+). It participates in amino-acid biosynthesis; L-arginine biosynthesis; carbamoyl phosphate from bicarbonate: step 1/1. Its pathway is pyrimidine metabolism; UMP biosynthesis via de novo pathway; (S)-dihydroorotate from bicarbonate: step 1/3. Large subunit of the glutamine-dependent carbamoyl phosphate synthetase (CPSase). CPSase catalyzes the formation of carbamoyl phosphate from the ammonia moiety of glutamine, carbonate, and phosphate donated by ATP, constituting the first step of 2 biosynthetic pathways, one leading to arginine and/or urea and the other to pyrimidine nucleotides. The large subunit (synthetase) binds the substrates ammonia (free or transferred from glutamine from the small subunit), hydrogencarbonate and ATP and carries out an ATP-coupled ligase reaction, activating hydrogencarbonate by forming carboxy phosphate which reacts with ammonia to form carbamoyl phosphate. The chain is Carbamoyl phosphate synthase large chain from Listeria monocytogenes serotype 4a (strain HCC23).